A 344-amino-acid chain; its full sequence is NDP-polyphosphate phosphotransferase 2 (344 aa).

The tract at residues 1–60 (METAKPIAPQKDSKANGVDATDPVVKVASPQDPAGDAKVEDATAPVAEVEPRTPRNRRLP) is disordered.

The protein belongs to the polyphosphate kinase 2 (PPK2) family. Class I subfamily. It depends on Mg(2+) as a cofactor.

It carries out the reaction [phosphate](n) + ATP = [phosphate](n+1) + ADP. It catalyses the reaction [phosphate](n) + CTP = [phosphate](n+1) + CDP. The enzyme catalyses [phosphate](n) + GTP = [phosphate](n+1) + GDP. The catalysed reaction is [phosphate](n) + UTP = [phosphate](n+1) + UDP. Uses inorganic polyphosphate (polyP) as a donor to convert NDP to NTP. PolyP hydrolysis is slightly faster with ADP, but it can also use GDP, CDP and UDP. This is NDP-polyphosphate phosphotransferase 2 from Ruegeria pomeroyi (strain ATCC 700808 / DSM 15171 / DSS-3) (Silicibacter pomeroyi).